A 303-amino-acid chain; its full sequence is MEGLVNNSGDKDLDEKLLQPFTYILQVPGKQIRAKLAHAFNYWLKIPNDKLNIVGEIIQMLHNSSLLIDDIQDNSILRRGIPVAHSIYGVASTINAANYVIFLAVEKVLRLEHPEATRVCIDQLLELHRGQGIEIYWRDNFQCPSEDEYKLMTIRKTGGLFMLAIRLMQLFSESDADFTKLAGILGLYFQIRDDYCNLCLQEYSENKSFCEDLTEGKFSFPIIHAIRSRPDDRQVIQILRQRTRDVEVKKYCVTLLEKFGSFSHTRETLAQLDREAREEVARLGGNPFLEAILNDLLNWDRTK.

Residues Asp-69 and Asp-73 each coordinate Mg(2+). A DDXXD motif motif is present at residues 69-73; that stretch reads DDIQD.

Belongs to the FPP/GGPP synthase family. Mg(2+) is required as a cofactor.

The catalysed reaction is (2E)-geranyl diphosphate + H2O = (2E)-geraniol + diphosphate. Functionally, terpene synthase that is able to convert geraniol diphosphate to geraniol in tea leaves. This is Terpene synthase from Matsumurasca onukii (Tea green leafhopper).